The chain runs to 441 residues: Ribosomal protein uS12 methylthiotransferase RimO (441 aa).

The region spanning 7–117 (PKISFVSLGC…VLEAVHRASP (111 aa)) is the MTTase N-terminal domain. C16, C52, C81, C148, C152, and C155 together coordinate [4Fe-4S] cluster. Residues 134–371 (LTPRHYAYLK…MARQQKISAR (238 aa)) form the Radical SAM core domain. Positions 374-440 (KRKVGTRQQI…EYDLHGTVAG (67 aa)) constitute a TRAM domain.

Belongs to the methylthiotransferase family. RimO subfamily. Requires [4Fe-4S] cluster as cofactor.

It is found in the cytoplasm. The enzyme catalyses L-aspartate(89)-[ribosomal protein uS12]-hydrogen + (sulfur carrier)-SH + AH2 + 2 S-adenosyl-L-methionine = 3-methylsulfanyl-L-aspartate(89)-[ribosomal protein uS12]-hydrogen + (sulfur carrier)-H + 5'-deoxyadenosine + L-methionine + A + S-adenosyl-L-homocysteine + 2 H(+). Its function is as follows. Catalyzes the methylthiolation of an aspartic acid residue of ribosomal protein uS12. The protein is Ribosomal protein uS12 methylthiotransferase RimO of Bradyrhizobium sp. (strain BTAi1 / ATCC BAA-1182).